Reading from the N-terminus, the 443-residue chain is Chromosomal replication initiator protein DnaA (443 aa).

The tract at residues methionine 1–glutamate 80 is domain I, interacts with DnaA modulators. Residues glutamate 80–phenylalanine 104 are domain II. The interval glutamine 105–lysine 321 is domain III, AAA+ region. 4 residues coordinate ATP: glycine 148, glycine 150, lysine 151, and threonine 152. Residues lysine 322–glutamine 443 form a domain IV, binds dsDNA region.

It belongs to the DnaA family. In terms of assembly, oligomerizes as a right-handed, spiral filament on DNA at oriC.

The protein localises to the cytoplasm. In terms of biological role, plays an essential role in the initiation and regulation of chromosomal replication. ATP-DnaA binds to the origin of replication (oriC) to initiate formation of the DNA replication initiation complex once per cell cycle. Binds the DnaA box (a 9 base pair repeat at the origin) and separates the double-stranded (ds)DNA. Forms a right-handed helical filament on oriC DNA; dsDNA binds to the exterior of the filament while single-stranded (ss)DNA is stabiized in the filament's interior. The ATP-DnaA-oriC complex binds and stabilizes one strand of the AT-rich DNA unwinding element (DUE), permitting loading of DNA polymerase. After initiation quickly degrades to an ADP-DnaA complex that is not apt for DNA replication. Binds acidic phospholipids. This is Chromosomal replication initiator protein DnaA from Leptospira interrogans serogroup Icterohaemorrhagiae serovar copenhageni (strain Fiocruz L1-130).